Consider the following 184-residue polypeptide: Ethylene-responsive transcription factor ERF010 (184 aa).

The segment at residues 20–77 is a DNA-binding region (AP2/ERF); that stretch reads PYKGIRMRKWGKWVAEIREPNKRSRLWLGSYSTPEAAARAYDTAVFYLRGPTARLNFP. Residues 123–184 are disordered; sequence QNRDSDVDNK…SSDEEWESKH (62 aa). Positions 161–172 are enriched in basic and acidic residues; sequence LLDRVDLNKLPD. Over residues 174 to 184 the composition is skewed to acidic residues; that stretch reads ESSDEEWESKH.

The protein belongs to the AP2/ERF transcription factor family. ERF subfamily.

Its subcellular location is the nucleus. In terms of biological role, probably acts as a transcriptional activator. Binds to the GCC-box pathogenesis-related promoter element. May be involved in the regulation of gene expression by stress factors and by components of stress signal transduction pathways. This Arabidopsis thaliana (Mouse-ear cress) protein is Ethylene-responsive transcription factor ERF010 (ERF010).